We begin with the raw amino-acid sequence, 152 residues long: Large ribosomal subunit protein bL9 (152 aa).

This sequence belongs to the bacterial ribosomal protein bL9 family.

Its function is as follows. Binds to the 23S rRNA. This chain is Large ribosomal subunit protein bL9, found in Thermosynechococcus vestitus (strain NIES-2133 / IAM M-273 / BP-1).